Here is a 263-residue protein sequence, read N- to C-terminus: 5'-nucleotidase SurE (263 aa).

The a divalent metal cation site is built by Asp-15, Asp-16, Ser-46, and Asn-102.

This sequence belongs to the SurE nucleotidase family. It depends on a divalent metal cation as a cofactor.

The protein localises to the cytoplasm. The catalysed reaction is a ribonucleoside 5'-phosphate + H2O = a ribonucleoside + phosphate. Its function is as follows. Nucleotidase that shows phosphatase activity on nucleoside 5'-monophosphates. This chain is 5'-nucleotidase SurE, found in Chlorobaculum tepidum (strain ATCC 49652 / DSM 12025 / NBRC 103806 / TLS) (Chlorobium tepidum).